Consider the following 230-residue polypeptide: Translation initiation factor IF-3 (230 aa).

Disordered regions lie at residues 1 to 21 (MAIQHRDPRGGGGSRDARTNR) and 184 to 230 (LQSQ…AAQR). The segment covering 193 to 208 (AAAAAAPAAAPAAGAP) has biased composition (low complexity). A compositionally biased stretch (pro residues) spans 209-220 (APAPAPAAPAPA). Over residues 221-230 (PTAADPAAQR) the composition is skewed to low complexity.

This sequence belongs to the IF-3 family. Monomer.

The protein localises to the cytoplasm. IF-3 binds to the 30S ribosomal subunit and shifts the equilibrium between 70S ribosomes and their 50S and 30S subunits in favor of the free subunits, thus enhancing the availability of 30S subunits on which protein synthesis initiation begins. This Anaeromyxobacter dehalogenans (strain 2CP-1 / ATCC BAA-258) protein is Translation initiation factor IF-3.